Consider the following 122-residue polypeptide: Large ribosomal subunit protein uL14 (122 aa).

Belongs to the universal ribosomal protein uL14 family. In terms of assembly, part of the 50S ribosomal subunit. Forms a cluster with proteins L3 and L19. In the 70S ribosome, L14 and L19 interact and together make contacts with the 16S rRNA in bridges B5 and B8.

Functionally, binds to 23S rRNA. Forms part of two intersubunit bridges in the 70S ribosome. This Chlorobium limicola (strain DSM 245 / NBRC 103803 / 6330) protein is Large ribosomal subunit protein uL14.